The chain runs to 130 residues: MNFPSTKVPWAAVTLLLLLLLPPALLSLGVDAQPLPDCCRQKTCSCRLYELLHGAGNHAAGILTLGKRRPGPPGLQGRLQRLLQANGNHAAGILTMGRRAGAELEPHPCSGRGCPTVTTTALAPRGGSGV.

Residues 1-32 (MNFPSTKVPWAAVTLLLLLLLPPALLSLGVDA) form the signal peptide. Position 33 is a pyrrolidone carboxylic acid (Gln-33). Cystine bridges form between Cys-38–Cys-44 and Cys-39–Cys-46. Leu-65 is subject to Leucine amide. Met-96 is modified (methionine amide). The propeptide occupies 97–130 (GRRAGAELEPHPCSGRGCPTVTTTALAPRGGSGV).

This sequence belongs to the orexin family. Post-translationally, specific enzymatic cleavages at paired basic residues yield the different active peptides. As to expression, restricted to neuronal cell bodies of the dorsal and lateral hypothalamus.

It is found in the rough endoplasmic reticulum. Its subcellular location is the cytoplasmic vesicle. The protein localises to the synapse. In terms of biological role, neuropeptides that play a significant role in the regulation of food intake and sleep-wakefulness, possibly by coordinating the complex behavioral and physiologic responses of these complementary homeostatic functions. A broader role in the homeostatic regulation of energy metabolism, autonomic function, hormonal balance and the regulation of body fluids, is also suggested. Its function is as follows. Binds to orexin receptors HCRTR1/OX1R and HCRTR2/OX2R with a high affinity. Stimulates food intake. Modulates pituitary luteinizing hormone secretion in an ovarian steroid-dependent manner. Functionally, binds to orexin receptor HCRTR2/OX2R only. Stimulates food intake. Modulates pituitary luteinizing hormone secretion in an ovarian steroid-dependent manner. This is Hypocretin neuropeptide precursor (Hcrt) from Mus musculus (Mouse).